Consider the following 523-residue polypeptide: Heparanase (523 aa).

Positions 1–18 (MLVLLLLVLLLAVPPRRT) are cleaved as a signal peptide. Residues 42–44 (DAS), Thr-77, and 137–141 (KKHKN) contribute to the heparan sulfate group site. N-linked (GlcNAc...) asparagine glycosylation is found at Asn-141 and Asn-196. Glu-204 functions as the Proton donor in the catalytic mechanism. Residues 250 to 260 (QPRKHTQHLLR), His-276, and Arg-283 contribute to the heparan sulfate group site. The interval 268 to 397 (KAIDSVTWHH…LLYKRLVGTR (130 aa)) is required for heterodimerization with the heparanase 8 kDa subunit. Glu-323 (nucleophile) is an active-site residue. Residues 328–330 (YGG) and 369–371 (GSY) contribute to the heparan sulfate group site. Cys-417 and Cys-522 are oxidised to a cystine. N-linked (GlcNAc...) asparagine glycans are attached at residues Asn-436 and Asn-439. The segment at 507 to 523 (FSYGFYVIRNAKAIACI) is required for transferring proheparanase to the Golgi apparatus, secretion and subsequent enzyme activity and for enhancement of PKB/AKT1 phosphorylation.

It belongs to the glycosyl hydrolase 79 family. As to quaternary structure, heterodimer; the active enzyme is a heterodimer of the 60 kDa and 45 kDa proteolytic products. N-glycosylated. In terms of processing, proteolytically cleaved to produce a 60 kDa and a 45 kDa product.

Its subcellular location is the secreted. The catalysed reaction is endohydrolysis of (1-&gt;4)-beta-D-glycosidic bonds of heparan sulfate chains in heparan sulfate proteoglycan.. Its function is as follows. Endoglycosidase that cleaves heparan sulfate proteoglycans (HSPGs) into heparan sulfate side chains and core proteoglycans. Participates in extracellular matrix (ECM) degradation and remodeling. Selectively cleaves the linkage between a glucuronic acid unit and an N-sulfo glucosamine unit carrying either a 3-O-sulfo or a 6-O-sulfo group. Can also cleave the linkage between a glucuronic acid unit and an N-sulfo glucosamine unit carrying a 2-O-sulfo group, but not linkages between a glucuronic acid unit and a 2-O-sulfated iduronic acid moiety. Increases cell adhesion to the extracellular matrix (ECM), independent of its enzymatic activity. This chain is Heparanase (HPSE), found in Gallus gallus (Chicken).